A 407-amino-acid polypeptide reads, in one-letter code: Extracellular superoxide dismutase [Cu-Zn] 3 (407 aa).

The signal sequence occupies residues 1–19; it reads MRLLSVLVFLISVISIAKA. Residues 20–386 are Extracellular-facing; that stretch reads DYQYAFCKFN…SESYNDNEPG (367 aa). Asparagine 51, asparagine 205, and asparagine 224 each carry an N-linked (GlcNAc...) asparagine glycan. Cu cation is bound by residues histidine 245 and histidine 247. A glycan (N-linked (GlcNAc...) asparagine) is linked at asparagine 256. Residue histidine 263 participates in Cu cation binding. Residues histidine 263, histidine 271, histidine 280, and aspartate 283 each contribute to the Zn(2+) site. A Cu cation-binding site is contributed by histidine 320. 2 N-linked (GlcNAc...) asparagine glycosylation sites follow: asparagine 321 and asparagine 364. A helical membrane pass occupies residues 387–406; sequence SSSTVIPFFALIIFSIIFAL. Position 407 (leucine 407) is a topological domain, cytoplasmic.

Belongs to the Cu-Zn superoxide dismutase family. The cofactor is Cu cation. Requires Zn(2+) as cofactor.

The protein localises to the cell membrane. The enzyme catalyses 2 superoxide + 2 H(+) = H2O2 + O2. Its function is as follows. Protect the extracellular space from toxic effect of reactive oxygen intermediates by converting superoxyde radicals into hydrogen peroxyde and oxygen. In Dictyostelium discoideum (Social amoeba), this protein is Extracellular superoxide dismutase [Cu-Zn] 3 (sodC).